Reading from the N-terminus, the 251-residue chain is NADPH-dependent oxidoreductase (251 aa).

Belongs to the flavin oxidoreductase frp family. Requires FMN as cofactor.

Its function is as follows. Reduces FMN, organic nitro compounds and disulfide DTNB. Involved in maintenance of the cellular redox state and the disulfide stress response. This chain is NADPH-dependent oxidoreductase (nfrA), found in Staphylococcus haemolyticus (strain JCSC1435).